The chain runs to 386 residues: Succinyl-diaminopimelate desuccinylase (386 aa).

Position 77 (His77) interacts with Zn(2+). The active site involves Asp79. A Zn(2+)-binding site is contributed by Asp110. Glu144 functions as the Proton acceptor in the catalytic mechanism. Zn(2+) contacts are provided by Glu145, Glu173, and His359.

It belongs to the peptidase M20A family. DapE subfamily. In terms of assembly, homodimer. Zn(2+) is required as a cofactor. It depends on Co(2+) as a cofactor.

It carries out the reaction N-succinyl-(2S,6S)-2,6-diaminopimelate + H2O = (2S,6S)-2,6-diaminopimelate + succinate. It participates in amino-acid biosynthesis; L-lysine biosynthesis via DAP pathway; LL-2,6-diaminopimelate from (S)-tetrahydrodipicolinate (succinylase route): step 3/3. Its function is as follows. Catalyzes the hydrolysis of N-succinyl-L,L-diaminopimelic acid (SDAP), forming succinate and LL-2,6-diaminopimelate (DAP), an intermediate involved in the bacterial biosynthesis of lysine and meso-diaminopimelic acid, an essential component of bacterial cell walls. In Ralstonia pickettii (strain 12J), this protein is Succinyl-diaminopimelate desuccinylase.